The following is a 478-amino-acid chain: Chromosomal replication initiator protein DnaA (478 aa).

Residues 1 to 71 are domain I, interacts with DnaA modulators; the sequence is MNLTHIWKTT…RNALTRVVGY (71 aa). A domain II region spans residues 71–136; that stretch reads YPVQVQVLIA…LDLASAMRSG (66 aa). The domain III, AAA+ region stretch occupies residues 137–353; sequence MLNPRYTFAS…GSLNRVAAYA (217 aa). Gly-181, Gly-183, Lys-184, and Thr-185 together coordinate ATP. Residues 354 to 478 form a domain IV, binds dsDNA region; the sequence is ELNRLPITID…RERIQMMRGL (125 aa).

It belongs to the DnaA family. As to quaternary structure, oligomerizes as a right-handed, spiral filament on DNA at oriC.

The protein localises to the cytoplasm. Its function is as follows. Plays an essential role in the initiation and regulation of chromosomal replication. ATP-DnaA binds to the origin of replication (oriC) to initiate formation of the DNA replication initiation complex once per cell cycle. Binds the DnaA box (a 9 base pair repeat at the origin) and separates the double-stranded (ds)DNA. Forms a right-handed helical filament on oriC DNA; dsDNA binds to the exterior of the filament while single-stranded (ss)DNA is stabiized in the filament's interior. The ATP-DnaA-oriC complex binds and stabilizes one strand of the AT-rich DNA unwinding element (DUE), permitting loading of DNA polymerase. After initiation quickly degrades to an ADP-DnaA complex that is not apt for DNA replication. Binds acidic phospholipids. The polypeptide is Chromosomal replication initiator protein DnaA (Chloroflexus aggregans (strain MD-66 / DSM 9485)).